A 665-amino-acid chain; its full sequence is Ribonuclease R 2 (665 aa).

The 327-residue stretch at 202 to 528 folds into the RNB domain; sequence REDYRNEITY…LIIHRLLHLY (327 aa). One can recognise an S1 motif domain in the interval 579–662; that stretch reads GEVYTGTITG…RKGTVDFEQI (84 aa).

It belongs to the RNR ribonuclease family. RNase R subfamily.

Its subcellular location is the cytoplasm. The enzyme catalyses Exonucleolytic cleavage in the 3'- to 5'-direction to yield nucleoside 5'-phosphates.. 3'-5' exoribonuclease that releases 5'-nucleoside monophosphates and is involved in maturation of structured RNAs. This chain is Ribonuclease R 2, found in Lactococcus lactis subsp. lactis (strain IL1403) (Streptococcus lactis).